A 195-amino-acid polypeptide reads, in one-letter code: Adenylate kinase (195 aa).

8–16 (GIPGVGKTT) serves as a coordination point for ATP.

The protein belongs to the archaeal adenylate kinase family. In terms of assembly, homotrimer.

Its subcellular location is the cytoplasm. The catalysed reaction is AMP + ATP = 2 ADP. The protein is Adenylate kinase (adkA) of Saccharolobus solfataricus (strain ATCC 35092 / DSM 1617 / JCM 11322 / P2) (Sulfolobus solfataricus).